A 374-amino-acid chain; its full sequence is MSDNSQKKVIVGMSGGVDSSVSAYLLQQQGYQVEGLFMKNWEEDDNEEYCTAAEDLADAQAVCDKLGIHLHTINFAAEYWDNVFEYFLEEYKAGRTPNPDILCNKEIKFKAFLEFADEVLDADFIAMGHYVRRTFPTAEEIANGVKPQMLRGLDSNKDQSYFLYTLSSEQVARSLFPVGELEKPEVRRIAEEQGLITAKKKDSTGICFIGERKFTEFLGKYLPAQPGNIETPEGKVIGQHQGLMYHTLGQRKGLHIGGTKGGGGNEDPWFVGEKDLKRNVLIAVQGKDHPLLKSQGLLASQLHWVDRTPIKAPLSCTVKTRYRQTDIPCTIIPVDDENIKVIFDEPQIAVTPGQSAVFYLDEVCLGGGIIEERI.

Residues 12-19 (GMSGGVDS) and Met-38 each bind ATP. Residues 98–100 (NPD) are interaction with target base in tRNA. Cys-103 (nucleophile) is an active-site residue. A disulfide bridge links Cys-103 with Cys-207. Gly-128 contacts ATP. Positions 157 to 159 (KDQ) are interaction with tRNA. Cys-207 serves as the catalytic Cysteine persulfide intermediate. Positions 321-322 (RY) are interaction with tRNA.

It belongs to the MnmA/TRMU family.

It localises to the cytoplasm. The enzyme catalyses S-sulfanyl-L-cysteinyl-[protein] + uridine(34) in tRNA + AH2 + ATP = 2-thiouridine(34) in tRNA + L-cysteinyl-[protein] + A + AMP + diphosphate + H(+). Functionally, catalyzes the 2-thiolation of uridine at the wobble position (U34) of tRNA, leading to the formation of s(2)U34. The chain is tRNA-specific 2-thiouridylase MnmA from Aliivibrio fischeri (strain MJ11) (Vibrio fischeri).